Here is a 375-residue protein sequence, read N- to C-terminus: E3 ubiquitin-protein ligase FANCL (375 aa).

Residues 104–294 (QPPSCSFCKD…KDVLEIDFPA (191 aa)) form a UBC-RWD region (URD) region. An RING-type; degenerate zinc finger spans residues 307 to 363 (CGICYARHLNGAIPDQVCNNPQCGQPFHEICLYEWLRGLSTSRQSFNVFFGDCPYCS).

Belongs to the multisubunit FA complex composed of FANCA, FANCB, FANCC, FANCE, FANCF, FANCG, FANCL/PHF9 and FANCM. In complex with FANCF, FANCA and FANCG, but not with FANCC, nor FANCE, interacts with HES1; this interaction may be essential for the stability and nuclear localization of FA core complex proteins. Interacts with FANCI. Interacts with GGN. Interacts (via the RING-type zinc finger) with UBE2T and UBE2W. In terms of processing, the RING-type zinc finger domain is monoubiquitinated in the presence of UBE2T and UBE2W.

Its subcellular location is the cytoplasm. It is found in the nucleus. It catalyses the reaction S-ubiquitinyl-[E2 ubiquitin-conjugating enzyme]-L-cysteine + [acceptor protein]-L-lysine = [E2 ubiquitin-conjugating enzyme]-L-cysteine + N(6)-ubiquitinyl-[acceptor protein]-L-lysine.. The protein operates within protein modification; protein ubiquitination. Its function is as follows. Ubiquitin ligase protein that mediates monoubiquitination of FANCD2, a key step in the DNA damage pathway. Also mediates monoubiquitination of FANCI. May stimulate the ubiquitin release from UBE2W. May be required for proper primordial germ cell proliferation in the embryonic stage, whereas it is probably not needed for spermatogonial proliferation after birth. The polypeptide is E3 ubiquitin-protein ligase FANCL (Fancl) (Mus musculus (Mouse)).